A 967-amino-acid chain; its full sequence is Translation initiation factor IF-2 (967 aa).

A disordered region spans residues 34 to 363; that stretch reads ASSTVEPPVA…APAVGGVSVP (330 aa). 2 stretches are compositionally biased toward low complexity: residues 51-96 and 103-154; these read PAGG…GNAA and ASEA…TPGP. The span at 184–196 shows a compositional bias: gly residues; that stretch reads RSEGGAQRGGPRP. Residues 197–206 are compositionally biased toward low complexity; that stretch reads GGQQRSGKPG. The span at 300-333 shows a compositional bias: gly residues; that stretch reads PRRGGGPGGGPGGGGGFRGRGGRGGTQGAFGRGG. Residues 334–345 show a composition bias toward basic residues; sequence ARGKHRKSKRAK. Residues 460–632 form the tr-type G domain; that stretch reads PRPPVVTVMG…IVLTADGALE (173 aa). The interval 469–476 is G1; that stretch reads GHVDHGKT. 469–476 lines the GTP pocket; it reads GHVDHGKT. The tract at residues 494 to 498 is G2; the sequence is GITQH. The segment at 519–522 is G3; that stretch reads DTPG. GTP is bound by residues 519–523 and 573–576; these read DTPGH and NKVD. Positions 573-576 are G4; that stretch reads NKVD. Residues 609 to 611 form a G5 region; the sequence is SAR.

It belongs to the TRAFAC class translation factor GTPase superfamily. Classic translation factor GTPase family. IF-2 subfamily.

The protein resides in the cytoplasm. Functionally, one of the essential components for the initiation of protein synthesis. Protects formylmethionyl-tRNA from spontaneous hydrolysis and promotes its binding to the 30S ribosomal subunits. Also involved in the hydrolysis of GTP during the formation of the 70S ribosomal complex. The protein is Translation initiation factor IF-2 of Kocuria rhizophila (strain ATCC 9341 / DSM 348 / NBRC 103217 / DC2201).